A 648-amino-acid chain; its full sequence is Chaperone protein DnaK (648 aa).

The residue at position 200 (T200) is a Phosphothreonine; by autocatalysis. A disordered region spans residues 612-631 (QAGAAGAAGAAEGAAQGGAQ).

Belongs to the heat shock protein 70 family.

Acts as a chaperone. The polypeptide is Chaperone protein DnaK (Burkholderia multivorans (strain ATCC 17616 / 249)).